The chain runs to 643 residues: uncharacterized protein (643 aa).

A helical membrane pass occupies residues 9-29 (IVLALLLLLLPVVCGDVSVYK).

Its subcellular location is the membrane. This is an uncharacterized protein from Methanocaldococcus jannaschii (strain ATCC 43067 / DSM 2661 / JAL-1 / JCM 10045 / NBRC 100440) (Methanococcus jannaschii).